Consider the following 660-residue polypeptide: Probable rhamnogalacturonate lyase B (660 aa).

The signal sequence occupies residues 1-20; it reads MRLSVSLGLASLWTAIGATA. N-linked (GlcNAc...) asparagine glycosylation is found at Asn-22, Asn-27, Asn-109, Asn-142, Asn-238, Asn-284, Asn-432, Asn-492, Asn-532, Asn-594, and Asn-635.

It belongs to the polysaccharide lyase 4 family.

The protein resides in the secreted. The catalysed reaction is Endotype eliminative cleavage of L-alpha-rhamnopyranosyl-(1-&gt;4)-alpha-D-galactopyranosyluronic acid bonds of rhamnogalacturonan I domains in ramified hairy regions of pectin leaving L-rhamnopyranose at the reducing end and 4-deoxy-4,5-unsaturated D-galactopyranosyluronic acid at the non-reducing end.. In terms of biological role, pectinolytic enzymes consist of four classes of enzymes: pectin lyase, polygalacturonase, pectin methylesterase and rhamnogalacturonase. Degrades the rhamnogalacturonan I (RG-I) backbone of pectin. The chain is Probable rhamnogalacturonate lyase B (rglB) from Aspergillus terreus (strain NIH 2624 / FGSC A1156).